The chain runs to 1441 residues: Histone-lysine N-methyltransferase SETD5 (1441 aa).

A disordered region spans residues 1 to 28 (MSIAIPLGVTTPDTSYSDMAAGSDPESV). Leucine 70 is subject to Phosphothreonine. Phosphoserine is present on residues serine 72 and valine 74. Positions 156 to 202 (TPTSITLTVRRTKPKKRKKSPEKGRAAPKTKKIKNSPSEAQNLDENT) are disordered. The span at 165–189 (RRTKPKKRKKSPEKGRAAPKTKKIK) shows a compositional bias: basic residues. Residues 190–202 (NSPSEAQNLDENT) show a composition bias toward polar residues. An SET domain is found at 269-390 (MQLQLGRVTR…KDAEVTIAFD (122 aa)). 2 disordered regions span residues 417–683 (NPNA…TVIS) and 793–816 (MTQTSSVPQETRTQHLYQSNETSN). Composition is skewed to acidic residues over residues 450–461 (LEQQNEVPEENP) and 479–501 (EEVDNPEEKPEEEEKEEATDDQE). Composition is skewed to low complexity over residues 539–552 (SSSDIEITTSSSEI) and 561–572 (AAPESEVSSPVS). Residues 575–588 (AIPSTPQSTGVNTR) show a composition bias toward polar residues. The span at 611–621 (SRPRPKSRISR) shows a compositional bias: basic residues. The segment covering 635–650 (QAIAQQAELSQAALEE) has biased composition (low complexity). Polar residues predominate over residues 652–683 (GSNNSVTPPEAGNTDSSGENRQLTGSDPTVIS). Serine 829 and serine 852 each carry phosphoserine. Disordered regions lie at residues 849–883 (QPLSPVTPPPPSSGSKSPQLTTPGQTHPGEEECRN), 1036–1228 (DLSR…SKGA), and 1243–1441 (CDSP…TGLS). Position 855 is a phosphothreonine (threonine 855). Residues 1062 to 1076 (QRKKVSLLEYRKRKQ) are compositionally biased toward basic residues. A compositionally biased stretch (low complexity) spans 1087–1107 (DSSQSKSKSSGAGQGSSNSVS). Positions 1144 to 1163 (PSDSRGTSSSHCRPQENISS) are enriched in polar residues. A Phosphoserine modification is found at serine 1197. The segment covering 1250 to 1259 (SQSLLQQSSS) has biased composition (low complexity). The segment covering 1265–1275 (PTQSPGYSYRT) has biased composition (polar residues). The span at 1284–1300 (PSHGSSESSLSSTSYPS) shows a compositional bias: low complexity. The segment covering 1319-1333 (YYSSQPHSGNSTGSN) has biased composition (polar residues). Over residues 1335 to 1372 (PRRSCSSSAASPTPQGPSDSPTSDSVSQSSTGTLSSTS) the composition is skewed to low complexity. Composition is skewed to polar residues over residues 1373–1382 (FPQNSRSSLP), 1389–1412 (SLPNAGQSAAYQASRVSAVSNSQH), and 1429–1441 (LQGSGVKTQTGLS).

As to quaternary structure, interacts with components of the PAF1 complex (PAF1C) such as LEO1, CTR9 and CDC73. Interacts with NCOR1. Interacts with HDAC3. In terms of tissue distribution, ubiquitously expressed.

The protein localises to the nucleus. It is found in the chromosome. It carries out the reaction L-lysyl(9)-[histone H3] + S-adenosyl-L-methionine = N(6)-methyl-L-lysyl(9)-[histone H3] + S-adenosyl-L-homocysteine + H(+). It catalyses the reaction L-lysyl(36)-[histone H3] + 3 S-adenosyl-L-methionine = N(6),N(6),N(6)-trimethyl-L-lysyl(36)-[histone H3] + 3 S-adenosyl-L-homocysteine + 3 H(+). In terms of biological role, chromatin regulator required for brain development: acts as a regulator of RNA elongation rate, thereby regulating neural stem cell (NSC) proliferation and synaptic transmission. May act by mediating trimethylation of 'Lys-36' of histone H3 (H3K36me3), which is essential to allow on-time RNA elongation dynamics. Also monomethylates 'Lys-9' of histone H3 (H3K9me1) in vitro. The relevance of histone methyltransferase activity is however subject to discussion. This is Histone-lysine N-methyltransferase SETD5 from Mus musculus (Mouse).